The chain runs to 873 residues: Leucine--tRNA ligase (873 aa).

Positions 42–52 match the 'HIGH' region motif; the sequence is PYPSGKLHMGH. Positions 624-643 are disordered; sequence PVEIGGTEKMSKSKNNGVDP. The 'KMSKS' region signature appears at 632 to 636; sequence KMSKS. Lysine 635 is a binding site for ATP.

The protein belongs to the class-I aminoacyl-tRNA synthetase family.

The protein localises to the cytoplasm. The enzyme catalyses tRNA(Leu) + L-leucine + ATP = L-leucyl-tRNA(Leu) + AMP + diphosphate. The polypeptide is Leucine--tRNA ligase (Pseudomonas aeruginosa (strain ATCC 15692 / DSM 22644 / CIP 104116 / JCM 14847 / LMG 12228 / 1C / PRS 101 / PAO1)).